Reading from the N-terminus, the 200-residue chain is MPQKKHNRVRSAKVLRKTSETDISVEVDLDGSGSSTVDSGVTFLDHMLTNFSKHSGIDIALRCKGDTGIDDHHSVEDIAIVMGSAILEALGDKKGIHRYGWAIIPMDEALARCSLDLGGRSYCVFHAPFSRAEINGFSTEMVEHFFVSLSRTLQANLHLRVLEGSNTHHKIEALFKAFAYAMKQAVHIIGTDIPSTKGMI.

It belongs to the imidazoleglycerol-phosphate dehydratase family.

It is found in the cytoplasm. It carries out the reaction D-erythro-1-(imidazol-4-yl)glycerol 3-phosphate = 3-(imidazol-4-yl)-2-oxopropyl phosphate + H2O. It functions in the pathway amino-acid biosynthesis; L-histidine biosynthesis; L-histidine from 5-phospho-alpha-D-ribose 1-diphosphate: step 6/9. The protein is Imidazoleglycerol-phosphate dehydratase of Chlorobium phaeobacteroides (strain BS1).